The primary structure comprises 502 residues: MSEQEVKELDLNGEMLVRREKLAALRAKGNAFPNKFRRDALAQDLHNQYDAEDGEILKEKGIEVQVAGRIMTRRAMGKATFITIQDMSGKIQLYVARDNLPEGVYKDDVGTWDLGDIVGIKGTLFKTKTDELTVKTTEVQLLTKALRPLPDKFHGLTDQEVRYRQRYLDLISNEESRRTFIIRSKVVAGIREYFISKGFMEVETPMLQVIPGGASARPFVTHHNALDVDMYLRIAPELYLKRLVVGGFERVFELNRNFRNEGVSVRHNPEFTMLEYYQAYADYHDLMDNTEELLRKLAIDILGTTIVKYGDLEFDFGKPFERITLHDATIKYGADKGIVKEDLYDFDRAKATAERLGIEVQKSWGLGSIVNAIFEEVAEHHLIQPTFLNGSPAEISPLARRNDENPEVTDRFELFIGGREIGNGFSELNDAEDQNERFDAQVAAKEAGDDEAMFKDEDFVVALEHGLPPTAGEGLGIDRLAMLYANAPSIRDVILFPAMRQK.

2 residues coordinate Mg(2+): Glu413 and Glu420.

This sequence belongs to the class-II aminoacyl-tRNA synthetase family. As to quaternary structure, homodimer. It depends on Mg(2+) as a cofactor.

It localises to the cytoplasm. It carries out the reaction tRNA(Lys) + L-lysine + ATP = L-lysyl-tRNA(Lys) + AMP + diphosphate. This is Lysine--tRNA ligase (lysS) from Haemophilus influenzae (strain ATCC 51907 / DSM 11121 / KW20 / Rd).